A 474-amino-acid chain; its full sequence is Ankyrin repeat, SAM and basic leucine zipper domain-containing protein 1 (474 aa).

Positions 1 to 31 are disordered; that stretch reads MAGRLRGPAVPGGGESSDSDEDGWDIGYTER. 3 positions are modified to phosphoserine: Ser16, Ser17, and Ser19. ANK repeat units follow at residues 43-72, 76-105, 108-142, 146-175, 179-208, and 212-241; these read EKDEVLKRALTTGDGSLLEELLNSGMQVDS, FGWTPLMYAASIANVDLVRILLDRGANASF, DQHTVLMAACSARVPEERILKTAELLLSRNASPNA, KRMSPLMYAAREGHSQLVALLVGHGAEINA, NGYTALAWAARHGHKTTVLKLLELGADKTL, and DGKTPAEIAKRNKHPELFSMLSLTLNPLHG. In terms of domain architecture, SAM spans 270 to 333; the sequence is SYSAFGDLEI…KIMDAVEELQ (64 aa).

In terms of assembly, interacts with DDX4, PIWIL1, RANBP9 and TDRD1.

The protein resides in the cytoplasm. Its function is as follows. Plays a central role during spermatogenesis by repressing transposable elements and preventing their mobilization, which is essential for the germline integrity. Acts via the piRNA metabolic process, which mediates the repression of transposable elements during meiosis by forming complexes composed of piRNAs and Piwi proteins and governs the methylation and subsequent repression of transposons. Its association with pi-bodies suggests a participation in the primary piRNAs metabolic process. Required prior to the pachytene stage to facilitate the production of multiple types of piRNAs, including those associated with repeats involved in the regulation of retrotransposons. May act by mediating protein-protein interactions during germ cell maturation. In Ornithorhynchus anatinus (Duckbill platypus), this protein is Ankyrin repeat, SAM and basic leucine zipper domain-containing protein 1 (ASZ1).